A 510-amino-acid polypeptide reads, in one-letter code: GMP synthase [glutamine-hydrolyzing] (510 aa).

The 191-residue stretch at 5–195 folds into the Glutamine amidotransferase type-1 domain; sequence LVLVVDFGGQ…LFNVCNLKGD (191 aa). Catalysis depends on Cys-82, which acts as the Nucleophile. Catalysis depends on residues His-169 and Glu-171. Residues 196-385 form the GMPS ATP-PPase domain; the sequence is WSMSSFAEQQ…LGIPHKLVWR (190 aa). Position 223 to 229 (223 to 229) interacts with ATP; that stretch reads SGGVDSS.

In terms of assembly, homodimer.

It carries out the reaction XMP + L-glutamine + ATP + H2O = GMP + L-glutamate + AMP + diphosphate + 2 H(+). Its pathway is purine metabolism; GMP biosynthesis; GMP from XMP (L-Gln route): step 1/1. Catalyzes the synthesis of GMP from XMP. The protein is GMP synthase [glutamine-hydrolyzing] of Clostridium botulinum (strain Loch Maree / Type A3).